A 271-amino-acid chain; its full sequence is MSVDVKSEFSENDSSSSSSSPTNVNNVAWPNYQMMPFMNAQPLRDKMLQPSFDPQLYGRWPQMGEAGFYGHSDIYSTFALPQLSTNGQILPTAEVVEVKPPLSNGSSSSDSGMYPSPNDLTPFPSTSSGIGASSSSSDLQAAAAAAANYQMRAATCYQQSVWPFMDYQQPFPWKMPLGSAGKERRASSDTKSLPTGPGTNNVRVRTADKYRMVYSDYQRLELEKEFHTSAFITSDRKSQLSTMLSLTERQIKIWFQNRRAKDRRDKQKIRL.

Disordered stretches follow at residues 1–25 (MSVD…TNVN), 100–135 (PPLS…ASSS), and 178–202 (GSAG…TNNV). 2 stretches are compositionally biased toward low complexity: residues 100 to 117 (PPLS…YPSP) and 125 to 135 (STSSGIGASSS). Residues 189–202 (DTKSLPTGPGTNNV) show a composition bias toward polar residues. The homeobox DNA-binding region spans 207-266 (ADKYRMVYSDYQRLELEKEFHTSAFITSDRKSQLSTMLSLTERQIKIWFQNRRAKDRRDK).

This sequence belongs to the Caudal homeobox family. In terms of assembly, interacts with tir-1 and let-756.

It is found in the nucleus. Its subcellular location is the chromosome. The protein resides in the centromere. It localises to the kinetochore. Functionally, transcriptional activator. Interacts with promoter regions for tbx-8.9, tbx-9, elt-1, hnd-1, scrt-1, and vab-7 genes. Binds the sequence ATTTATGAC. Binds to the enhancer region of the hlh-1 gene promoter during embryonic body wall muscle development. Activates the gene for mab-5 in embryo development. Necessary for vab-7 expression in C blastomeres in the posterior of embryos. Required for posterior V6 neuroectoblast cell fate specification during postembryonic neurogenesis (patterning) which generates the characteristic ray lineage during male tail development. Binds to ced-3 promoter and activated expression which is crucial for tail-spike cell death. Has a role in E cell specification in endoderm development and body wall muscle development. The polypeptide is Homeobox protein pal-1 (Caenorhabditis briggsae).